The following is a 98-amino-acid chain: NADH-ubiquinone oxidoreductase chain 4L (98 aa).

3 consecutive transmembrane segments (helical) span residues Met1–Ile21, Ser28–Ile48, and Ala59–Val79.

The protein belongs to the complex I subunit 4L family. In terms of assembly, core subunit of respiratory chain NADH dehydrogenase (Complex I) which is composed of 45 different subunits.

Its subcellular location is the mitochondrion inner membrane. The catalysed reaction is a ubiquinone + NADH + 5 H(+)(in) = a ubiquinol + NAD(+) + 4 H(+)(out). Functionally, core subunit of the mitochondrial membrane respiratory chain NADH dehydrogenase (Complex I) which catalyzes electron transfer from NADH through the respiratory chain, using ubiquinone as an electron acceptor. Part of the enzyme membrane arm which is embedded in the lipid bilayer and involved in proton translocation. The sequence is that of NADH-ubiquinone oxidoreductase chain 4L (MT-ND4L) from Tarsipes rostratus (Honey possum).